The primary structure comprises 414 residues: Histidine--tRNA ligase (414 aa).

The protein belongs to the class-II aminoacyl-tRNA synthetase family. As to quaternary structure, homodimer.

It localises to the cytoplasm. It carries out the reaction tRNA(His) + L-histidine + ATP = L-histidyl-tRNA(His) + AMP + diphosphate + H(+). This Mycoplasma pneumoniae (strain ATCC 29342 / M129 / Subtype 1) (Mycoplasmoides pneumoniae) protein is Histidine--tRNA ligase (hisS).